The sequence spans 132 residues: Fatty acid-binding protein 2 (132 aa).

Ser-2 carries the post-translational modification N-acetylserine. Residues Gln-40 and 128-130 (RYY) each bind hexadecanoate.

The protein belongs to the calycin superfamily. Fatty-acid binding protein (FABP) family. In terms of assembly, monomer. As to expression, midgut.

It is found in the cytoplasm. Binds fatty acids in a 1:1 molar ratio. The chain is Fatty acid-binding protein 2 (MFB2) from Manduca sexta (Tobacco hawkmoth).